We begin with the raw amino-acid sequence, 354 residues long: Sulfate/thiosulfate import ATP-binding protein CysA (354 aa).

In terms of domain architecture, ABC transporter spans Ile-3–Leu-237. ATP is bound at residue Gly-35–Thr-42.

Belongs to the ABC transporter superfamily. Sulfate/tungstate importer (TC 3.A.1.6) family. As to quaternary structure, the complex is composed of two ATP-binding proteins (CysA), two transmembrane proteins (CysT and CysW) and a solute-binding protein (CysP).

The protein localises to the cell inner membrane. It carries out the reaction sulfate(out) + ATP + H2O = sulfate(in) + ADP + phosphate + H(+). The catalysed reaction is thiosulfate(out) + ATP + H2O = thiosulfate(in) + ADP + phosphate + H(+). In terms of biological role, part of the ABC transporter complex CysAWTP involved in sulfate/thiosulfate import. Responsible for energy coupling to the transport system. This Bordetella bronchiseptica (strain ATCC BAA-588 / NCTC 13252 / RB50) (Alcaligenes bronchisepticus) protein is Sulfate/thiosulfate import ATP-binding protein CysA.